A 122-amino-acid polypeptide reads, in one-letter code: Large ribosomal subunit protein bL12 (122 aa).

Belongs to the bacterial ribosomal protein bL12 family. Homodimer. Part of the ribosomal stalk of the 50S ribosomal subunit. Forms a multimeric L10(L12)X complex, where L10 forms an elongated spine to which 2 to 4 L12 dimers bind in a sequential fashion. Binds GTP-bound translation factors.

Forms part of the ribosomal stalk which helps the ribosome interact with GTP-bound translation factors. Is thus essential for accurate translation. This chain is Large ribosomal subunit protein bL12, found in Sodalis glossinidius (strain morsitans).